Here is a 137-residue protein sequence, read N- to C-terminus: Protein apnoia (137 aa).

A run of 3 helical transmembrane segments spans residues Ile7 to Ala27, Leu55 to Val75, and Ser76 to Ser96.

Interacts with crb.

Its subcellular location is the apical cell membrane. Functionally, transmembrane protein that plays a key role in trachea development by regulating crb localization and maintenance at the apical cell membrane. Required for anisotropic apical surface expansion important for tracheal tube elongation and lumen stability at larval stages. The protein is Protein apnoia of Drosophila melanogaster (Fruit fly).